The sequence spans 254 residues: 3-deoxy-manno-octulosonate cytidylyltransferase (254 aa).

Belongs to the KdsB family.

The protein resides in the cytoplasm. The catalysed reaction is 3-deoxy-alpha-D-manno-oct-2-ulosonate + CTP = CMP-3-deoxy-beta-D-manno-octulosonate + diphosphate. The protein operates within nucleotide-sugar biosynthesis; CMP-3-deoxy-D-manno-octulosonate biosynthesis; CMP-3-deoxy-D-manno-octulosonate from 3-deoxy-D-manno-octulosonate and CTP: step 1/1. It participates in bacterial outer membrane biogenesis; lipopolysaccharide biosynthesis. Functionally, activates KDO (a required 8-carbon sugar) for incorporation into bacterial lipopolysaccharide in Gram-negative bacteria. This is 3-deoxy-manno-octulosonate cytidylyltransferase from Chlamydia felis (strain Fe/C-56) (Chlamydophila felis).